The primary structure comprises 943 residues: MTDYKATLNLPDTAFPMKAGLPQREPQILQRWDSIGLYGKLREIGKDRPKFVLHDGPPYANGKIHIGHALNKILKDMIVRSKTLSGFDAPYVPGWDCHGLPIEHKVEVTHGKHLTADRTRELCREYAAEQIEGQKTEFIRLGVLGDWDNPYKTMNFANEAGEIRALAEMVKQGFVFKGLKPVNWCFDCGSALAEAEVEYADKKSQTIDVAFPVADADKLAAAFGLSALAKPAAIVIWTTTPWTIPANQALNIHPDFKYALVDTGERLLVLAEELVESCLKRYNLEGSVIATAQGSALELINFRHPFYDRLSPIYLAEYVELGAGTGVVHSSPAYGEDDFVTCKRYGMVNEDILTPVQSNGVYVESLPFFGGQFIWKANPAIVDKLSEVGALMHTETISHSYMHCWRHKTPLIYRATAQWFVGMDKQPSTGEPLRERALKAIEETKFVPAWGQARLHSMIANRPDWCISRQRNWGVPIPFFLDKQTGELHPRTVELMEEVAKRVEQEGIEAWFKLDAQELLGDEAGQYDKITDTLDVWFDSGTTHWHVLRGSHDIGHATGPRADLYLEGSDQHRGWFHSSLLTGCAIDGHAPYRELLTHGFTVDENGRKMSKSLGNTIEPQKVNDTLGADILRLWVSATDYSGEMAVSEQILQRSADAYRRIRNTARFLLSNLSGFDPARDLLPAEDMLALDRWAVDRTLLLQRELEEHYSEYRFWNVYSKVHNFCVQELGGFYLDIIKDRQYTTGANSVARRSCQTALYHISEALVRWIAPILAFTADEIWQYLPGERNESVMLNTWYEGLSELPADAELDRAYWDRVMAVKAAVNKELENQRTAKVIGGNLQAEVTLFAEEGLTADLNKLGDELRFVLITSAASVVPFVQAPADAVTTEVEGLKLKVVKSGHAKCGRCWHFRADVGSHPEHPEICGRCVDNLNGSGEVRHYA.

A 'HIGH' region motif is present at residues 58–68 (PYANGKIHIGH). Glu567 contributes to the L-isoleucyl-5'-AMP binding site. The 'KMSKS' region motif lies at 608 to 612 (KMSKS). ATP is bound at residue Lys611. Zn(2+) contacts are provided by Cys906, Cys909, Cys926, and Cys929.

Belongs to the class-I aminoacyl-tRNA synthetase family. IleS type 1 subfamily. In terms of assembly, monomer. It depends on Zn(2+) as a cofactor.

The protein resides in the cytoplasm. It catalyses the reaction tRNA(Ile) + L-isoleucine + ATP = L-isoleucyl-tRNA(Ile) + AMP + diphosphate. Catalyzes the attachment of isoleucine to tRNA(Ile). As IleRS can inadvertently accommodate and process structurally similar amino acids such as valine, to avoid such errors it has two additional distinct tRNA(Ile)-dependent editing activities. One activity is designated as 'pretransfer' editing and involves the hydrolysis of activated Val-AMP. The other activity is designated 'posttransfer' editing and involves deacylation of mischarged Val-tRNA(Ile). This chain is Isoleucine--tRNA ligase, found in Pseudomonas entomophila (strain L48).